Here is a 359-residue protein sequence, read N- to C-terminus: tRNA N6-adenosine threonylcarbamoyltransferase (359 aa).

Fe cation is bound by residues His115 and His119. Residues 137–141 (LVSGG), Asp170, Gly183, and Asn283 each bind substrate. Asp311 provides a ligand contact to Fe cation. Residues 328-359 (APDSLDLAPRSRWPLDEKSAPLIGTGRRGAKA) form a disordered region.

It belongs to the KAE1 / TsaD family. It depends on Fe(2+) as a cofactor.

It localises to the cytoplasm. The enzyme catalyses L-threonylcarbamoyladenylate + adenosine(37) in tRNA = N(6)-L-threonylcarbamoyladenosine(37) in tRNA + AMP + H(+). Required for the formation of a threonylcarbamoyl group on adenosine at position 37 (t(6)A37) in tRNAs that read codons beginning with adenine. Is involved in the transfer of the threonylcarbamoyl moiety of threonylcarbamoyl-AMP (TC-AMP) to the N6 group of A37, together with TsaE and TsaB. TsaD likely plays a direct catalytic role in this reaction. The polypeptide is tRNA N6-adenosine threonylcarbamoyltransferase (Brucella anthropi (strain ATCC 49188 / DSM 6882 / CCUG 24695 / JCM 21032 / LMG 3331 / NBRC 15819 / NCTC 12168 / Alc 37) (Ochrobactrum anthropi)).